The chain runs to 65 residues: Large ribosomal subunit protein bL35 (65 aa).

Belongs to the bacterial ribosomal protein bL35 family.

The sequence is that of Large ribosomal subunit protein bL35 from Heliobacterium modesticaldum (strain ATCC 51547 / Ice1).